A 400-amino-acid polypeptide reads, in one-letter code: S-adenosylmethionine synthase (400 aa).

137–142 (GEGSGD) lines the ATP pocket.

It belongs to the AdoMet synthase 2 family. The cofactor is Mg(2+).

It catalyses the reaction L-methionine + ATP + H2O = S-adenosyl-L-methionine + phosphate + diphosphate. It participates in amino-acid biosynthesis; S-adenosyl-L-methionine biosynthesis; S-adenosyl-L-methionine from L-methionine: step 1/1. In terms of biological role, catalyzes the formation of S-adenosylmethionine from methionine and ATP. This chain is S-adenosylmethionine synthase, found in Haloarcula marismortui (strain ATCC 43049 / DSM 3752 / JCM 8966 / VKM B-1809) (Halobacterium marismortui).